The sequence spans 137 residues: Nucleoside diphosphate kinase (137 aa).

ATP is bound by residues Lys10, Phe58, Arg86, Thr92, Arg103, and Asn113. The active-site Pros-phosphohistidine intermediate is the His116.

The protein belongs to the NDK family. As to quaternary structure, homotetramer. Requires Mg(2+) as cofactor.

The protein resides in the cytoplasm. It carries out the reaction a 2'-deoxyribonucleoside 5'-diphosphate + ATP = a 2'-deoxyribonucleoside 5'-triphosphate + ADP. The catalysed reaction is a ribonucleoside 5'-diphosphate + ATP = a ribonucleoside 5'-triphosphate + ADP. Major role in the synthesis of nucleoside triphosphates other than ATP. The ATP gamma phosphate is transferred to the NDP beta phosphate via a ping-pong mechanism, using a phosphorylated active-site intermediate. In Helicobacter pylori (strain P12), this protein is Nucleoside diphosphate kinase.